The chain runs to 236 residues: Peptidase E (236 aa).

Residues S122, D137, and H159 each act as charge relay system in the active site.

It belongs to the peptidase S51 family.

The protein resides in the cytoplasm. The catalysed reaction is Dipeptidase E catalyzes the hydrolysis of dipeptides Asp-|-Xaa. It does not act on peptides with N-terminal Glu, Asn or Gln, nor does it cleave isoaspartyl peptides.. Its function is as follows. Hydrolyzes dipeptides containing N-terminal aspartate residues. May play a role in allowing the cell to use peptide aspartate to spare carbon otherwise required for the synthesis of the aspartate family of amino acids. This is Peptidase E from Shewanella sp. (strain ANA-3).